A 498-amino-acid polypeptide reads, in one-letter code: ATP synthase subunit beta, chloroplastic (498 aa).

172–179 is a binding site for ATP; the sequence is GGAGVGKT.

It belongs to the ATPase alpha/beta chains family. In terms of assembly, F-type ATPases have 2 components, CF(1) - the catalytic core - and CF(0) - the membrane proton channel. CF(1) has five subunits: alpha(3), beta(3), gamma(1), delta(1), epsilon(1). CF(0) has four main subunits: a(1), b(1), b'(1) and c(9-12).

It localises to the plastid. Its subcellular location is the chloroplast thylakoid membrane. It carries out the reaction ATP + H2O + 4 H(+)(in) = ADP + phosphate + 5 H(+)(out). Functionally, produces ATP from ADP in the presence of a proton gradient across the membrane. The catalytic sites are hosted primarily by the beta subunits. This is ATP synthase subunit beta, chloroplastic from Sorghum bicolor (Sorghum).